A 131-amino-acid chain; its full sequence is C-type natriuretic peptide 1 (131 aa).

The first 22 residues, 1–22 (MLYPALLCAALLLIAPLGHTEG), serve as a signal peptide directing secretion. A propeptide spanning residues 23–109 (RTLHPSPDAI…KRAVMDRSRR (87 aa)) is cleaved from the precursor. The cysteines at positions 115 and 131 are disulfide-linked.

It belongs to the natriuretic peptide family. Expressed in brain and to a low extent in atrium.

It localises to the secreted. Exhibits natriuretic and vasodepressant activity. Has a cGMP-stimulating activity. The polypeptide is C-type natriuretic peptide 1 (Oncorhynchus mykiss (Rainbow trout)).